We begin with the raw amino-acid sequence, 30 residues long: Mycofactocin precursor peptide (30 aa).

It belongs to the mycofactocin precursor peptide family. Interacts with MftB. In terms of processing, the post-translational modifications that lead to mycofactocin involve oxidative decarboxylation of the C-terminal tyrosine residue catalyzed by MftC, introduction of a tyramine-valine cross-link, removal of the modified C-terminal dipeptide by MftE. The released dipeptide then undergoes oxidative deamination by MftD, glycosylation by MftF and methylation by an unknown enzyme.

In terms of biological role, precursor peptide that leads to mycofactocin (MFT) after extensive post-translational modifications by enzymes encoded by adjacent genes. Mycofactocin acts as a redox cofactor of nicotinamide-dependent oxidoreductases encoded in the same locus. This Mycobacterium ulcerans (strain Agy99) protein is Mycofactocin precursor peptide.